We begin with the raw amino-acid sequence, 73 residues long: Protein F9 homolog (73 aa).

Residues Gly-1–Pro-34 lie on the Virion surface side of the membrane. Residues Trp-35–Leu-55 form a helical membrane-spanning segment. Over Arg-56 to Ala-73 the chain is Intravirion.

This sequence belongs to the chordopoxvirinae L1 protein family.

It localises to the virion membrane. In Capra hircus (Goat), this protein is Protein F9 homolog.